Consider the following 202-residue polypeptide: Peptidyl-tRNA hydrolase (202 aa).

Position 14 (Y14) interacts with tRNA. Residue H19 is the Proton acceptor of the active site. TRNA contacts are provided by F64, N66, and N112.

This sequence belongs to the PTH family. Monomer.

It localises to the cytoplasm. It carries out the reaction an N-acyl-L-alpha-aminoacyl-tRNA + H2O = an N-acyl-L-amino acid + a tRNA + H(+). In terms of biological role, hydrolyzes ribosome-free peptidyl-tRNAs (with 1 or more amino acids incorporated), which drop off the ribosome during protein synthesis, or as a result of ribosome stalling. Functionally, catalyzes the release of premature peptidyl moieties from peptidyl-tRNA molecules trapped in stalled 50S ribosomal subunits, and thus maintains levels of free tRNAs and 50S ribosomes. The polypeptide is Peptidyl-tRNA hydrolase (Methylobacterium radiotolerans (strain ATCC 27329 / DSM 1819 / JCM 2831 / NBRC 15690 / NCIMB 10815 / 0-1)).